Consider the following 259-residue polypeptide: 4-hydroxy-tetrahydrodipicolinate reductase (259 aa).

Residues 9–14 and E35 contribute to the NAD(+) site; that span reads GAGGRM. R36 contacts NADP(+). NAD(+) contacts are provided by residues 92–94 and 116–119; these read GTT and APNM. H149 (proton donor/acceptor) is an active-site residue. H150 lines the (S)-2,3,4,5-tetrahydrodipicolinate pocket. K153 functions as the Proton donor in the catalytic mechanism. A (S)-2,3,4,5-tetrahydrodipicolinate-binding site is contributed by 159–160; the sequence is GT.

It belongs to the DapB family.

It localises to the cytoplasm. The catalysed reaction is (S)-2,3,4,5-tetrahydrodipicolinate + NAD(+) + H2O = (2S,4S)-4-hydroxy-2,3,4,5-tetrahydrodipicolinate + NADH + H(+). The enzyme catalyses (S)-2,3,4,5-tetrahydrodipicolinate + NADP(+) + H2O = (2S,4S)-4-hydroxy-2,3,4,5-tetrahydrodipicolinate + NADPH + H(+). Its pathway is amino-acid biosynthesis; L-lysine biosynthesis via DAP pathway; (S)-tetrahydrodipicolinate from L-aspartate: step 4/4. Catalyzes the conversion of 4-hydroxy-tetrahydrodipicolinate (HTPA) to tetrahydrodipicolinate. The sequence is that of 4-hydroxy-tetrahydrodipicolinate reductase from Nitratidesulfovibrio vulgaris (strain DSM 19637 / Miyazaki F) (Desulfovibrio vulgaris).